Here is a 161-residue protein sequence, read N- to C-terminus: Protein-export protein SecB (161 aa).

Belongs to the SecB family. Homotetramer, a dimer of dimers. One homotetramer interacts with 1 SecA dimer.

Its subcellular location is the cytoplasm. Its function is as follows. One of the proteins required for the normal export of preproteins out of the cell cytoplasm. It is a molecular chaperone that binds to a subset of precursor proteins, maintaining them in a translocation-competent state. It also specifically binds to its receptor SecA. The sequence is that of Protein-export protein SecB from Ectopseudomonas mendocina (strain ymp) (Pseudomonas mendocina).